Reading from the N-terminus, the 200-residue chain is uncharacterized protein (200 aa).

2 stretches are compositionally biased toward low complexity: residues 1-13 (MTSA…AAES) and 28-44 (PSPA…AGPR). Disordered stretches follow at residues 1–116 (MTSA…GGPG) and 137–200 (LPRD…SSFF). The span at 88–102 (RCGRPRRRDPRRRRT) shows a compositional bias: basic residues. The segment covering 189-200 (PSSSSGLLSSFF) has biased composition (low complexity).

This is an uncharacterized protein from Homo sapiens (Human).